Reading from the N-terminus, the 175-residue chain is Crossover junction endodeoxyribonuclease RuvC (175 aa).

Catalysis depends on residues aspartate 8, glutamate 68, and aspartate 140. The Mg(2+) site is built by aspartate 8, glutamate 68, and aspartate 140.

It belongs to the RuvC family. Homodimer which binds Holliday junction (HJ) DNA. The HJ becomes 2-fold symmetrical on binding to RuvC with unstacked arms; it has a different conformation from HJ DNA in complex with RuvA. In the full resolvosome a probable DNA-RuvA(4)-RuvB(12)-RuvC(2) complex forms which resolves the HJ. Mg(2+) serves as cofactor.

Its subcellular location is the cytoplasm. It carries out the reaction Endonucleolytic cleavage at a junction such as a reciprocal single-stranded crossover between two homologous DNA duplexes (Holliday junction).. Its function is as follows. The RuvA-RuvB-RuvC complex processes Holliday junction (HJ) DNA during genetic recombination and DNA repair. Endonuclease that resolves HJ intermediates. Cleaves cruciform DNA by making single-stranded nicks across the HJ at symmetrical positions within the homologous arms, yielding a 5'-phosphate and a 3'-hydroxyl group; requires a central core of homology in the junction. The consensus cleavage sequence is 5'-(A/T)TT(C/G)-3'. Cleavage occurs on the 3'-side of the TT dinucleotide at the point of strand exchange. HJ branch migration catalyzed by RuvA-RuvB allows RuvC to scan DNA until it finds its consensus sequence, where it cleaves and resolves the cruciform DNA. This is Crossover junction endodeoxyribonuclease RuvC from Pseudomonas fluorescens (strain Pf0-1).